Reading from the N-terminus, the 745-residue chain is Cellulose synthase 1 catalytic subunit [UDP-forming] (745 aa).

Helical transmembrane passes span 29–49 (YVVGALGLCALLAATMVTLSL), 106–126 (GILGVTLLLAELYALYMLFLS), and 153–173 (IFIPTYDEALSIVRLTVLGAL). Positions 147–240 (EWPTVDIFIP…HILILDCDHI (94 aa)) are catalytic subdomain A. D189 is an active-site residue. 2 residues coordinate substrate: D236 and D238. Positions 317-377 (KAIEEIGGFA…GQRMRWARGM (61 aa)) are catalytic subdomain B. Residue D333 is part of the active site. The next 6 membrane-spanning stretches (helical) occupy residues 407-427 (FFFAIPRVIFLASPLAFLFFS), 430-450 (IIAASPLAVGVYAIPHMFHSI), 468-488 (VYETVMALFLVRVTIVTMLFP), 515-535 (NIIFAIIMALGLLRGLYALIF), 547-567 (ALNCIWSVISLIILMAVISVG), and 649-669 (AVFTWSISNIQVEAAVVRFVF). In terms of domain architecture, PilZ spans 572–670 (QLRQSHRIEA…EAAVVRFVFG (99 aa)). Positions 708–717 (IAHSRPKKKP) are enriched in basic residues. Residues 708-745 (IAHSRPKKKPIALPVERREPTTSQGGQKQEGKISRAAS) form a disordered region. Residues 736–745 (QEGKISRAAS) are compositionally biased toward basic and acidic residues.

This sequence belongs to the glycosyltransferase 2 family. The cofactor is Mg(2+).

Its subcellular location is the cell inner membrane. The catalysed reaction is [(1-&gt;4)-beta-D-glucosyl](n) + UDP-alpha-D-glucose = [(1-&gt;4)-beta-D-glucosyl](n+1) + UDP + H(+). Its pathway is glycan metabolism; bacterial cellulose biosynthesis. With respect to regulation, activated by bis-(3'-5') cyclic diguanylic acid (c-di-GMP). Catalytic subunit of cellulose synthase. It polymerizes uridine 5'-diphosphate glucose to cellulose. The thick cellulosic mats generated by this enzyme probably provide a specialized protective environment to the bacterium. This Komagataeibacter xylinus (Gluconacetobacter xylinus) protein is Cellulose synthase 1 catalytic subunit [UDP-forming] (bcsAI).